The primary structure comprises 279 residues: Probable endonuclease 4 (279 aa).

The Zn(2+) site is built by H69, H109, E145, D179, H182, H216, D229, H231, and E261.

It belongs to the AP endonuclease 2 family. Requires Zn(2+) as cofactor.

It catalyses the reaction Endonucleolytic cleavage to 5'-phosphooligonucleotide end-products.. In terms of biological role, endonuclease IV plays a role in DNA repair. It cleaves phosphodiester bonds at apurinic or apyrimidinic (AP) sites, generating a 3'-hydroxyl group and a 5'-terminal sugar phosphate. The protein is Probable endonuclease 4 of Tolumonas auensis (strain DSM 9187 / NBRC 110442 / TA 4).